The chain runs to 473 residues: Mitochondrial adenyl nucleotide antiporter SLC25A24-A (473 aa).

Residues 1–173 form a regulatory N-terminal domain region; the sequence is MLEQVQKFLL…RFWKHSTVLD (173 aa). Over 1-197 the chain is Mitochondrial intermembrane; it reads MLEQVQKFLL…EKKTGQWWKH (197 aa). 4 consecutive EF-hand domains span residues 19 to 54, 55 to 88, 86 to 121, and 122 to 157; these read DSHT…MGMA, VGKG…EEHE, EHEK…LGIN, and ISLD…NPAD. The Ca(2+) site is built by aspartate 32, asparagine 34, aspartate 36, lysine 38, glutamate 43, aspartate 68, asparagine 70, aspartate 72, histidine 74, glutamate 79, aspartate 99, asparagine 101, aspartate 103, lysine 105, glutamate 110, aspartate 135, aspartate 137, threonine 139, threonine 141, and glutamate 146. Positions 159–168 are linker region; that stretch reads IQQIIRFWKH. The interval 174–473 is C-terminal transmembrane transporter domain; the sequence is IGDSLTIPDE…YEKMKIQLGI (300 aa). 3 Solcar repeats span residues 192–277, 285–370, and 382–470; these read GQWW…YKKL, LGTA…LKNY, and PGVL…MKIQ. The helical transmembrane segment at 198–215 threads the bilayer; sequence LLAGGMAGAVSRTGTAPL. The Mitochondrial matrix segment spans residues 216–251; that stretch reads DRLKVMMQVHGTKGNSNIITGLKQMVKEGGVRSLWR. A helical membrane pass occupies residues 252–271; it reads GNGVNVIKIAPETAMKFWAY. Over 272–294 the chain is Mitochondrial intermembrane; sequence EQYKKLFTSESGKLGTAERFIAG. Residues 295-308 form a helical membrane-spanning segment; that stretch reads SLAGATAQTSIYPM. The Mitochondrial matrix segment spans residues 309–344; that stretch reads EVLKTRLAVGKTGQYSGMFDCAKKIMQKEGILAFYK. Residues 345–364 traverse the membrane as a helical segment; that stretch reads GYIPNILGIIPYAGIDLAIY. Topologically, residues 365–387 are mitochondrial intermembrane; it reads ETLKNYWLQNYAKDSANPGVLVL. A helical membrane pass occupies residues 388–405; sequence LGCGTVSSTCGQLASYPL. At 406-444 the chain is on the mitochondrial matrix side; that stretch reads ALIRTRMQAQASIEGAPQLNMGGLFRKIVAKEGFFGLYT. A helical transmembrane segment spans residues 445-464; that stretch reads GIAPNFLKVLPAVSISYVVY. Topologically, residues 465–473 are mitochondrial intermembrane; sequence EKMKIQLGI.

It belongs to the mitochondrial carrier (TC 2.A.29) family. Monomer.

It localises to the mitochondrion inner membrane. It carries out the reaction Mg(2+)(out) + phosphate(in) + ATP(out) = Mg(2+)(in) + phosphate(out) + ATP(in). It catalyses the reaction ADP(out) + phosphate(in) + H(+)(out) = ADP(in) + phosphate(out) + H(+)(in). The enzyme catalyses AMP(out) + phosphate(in) = AMP(in) + phosphate(out). The catalysed reaction is phosphate(in) + ATP(out) + 2 H(+)(out) = phosphate(out) + ATP(in) + 2 H(+)(in). It carries out the reaction dADP(in) + ADP(out) = dADP(out) + ADP(in). It catalyses the reaction Mg(2+)(in) + ADP(out) + ATP(in) + H(+)(out) = Mg(2+)(out) + ADP(in) + ATP(out) + H(+)(in). The enzyme catalyses ADP(out) + diphosphate(in) = ADP(in) + diphosphate(out). The catalysed reaction is dAMP(in) + ADP(out) + H(+)(out) = dAMP(out) + ADP(in) + H(+)(in). It carries out the reaction 3'-AMP(in) + ADP(out) + H(+)(out) = 3'-AMP(out) + ADP(in) + H(+)(in). It catalyses the reaction dAMP(out) + phosphate(in) = dAMP(in) + phosphate(out). The enzyme catalyses 3'-AMP(out) + phosphate(in) = 3'-AMP(in) + phosphate(out). The catalysed reaction is dADP(out) + phosphate(in) + H(+)(out) = dADP(in) + phosphate(out) + H(+)(in). Its activity is regulated as follows. Activated by an increase in cytosolic calcium levels that induce a conformational change of the N-terminal regulatory domain, uncapping the channel and allowing transport. Inhibited by bathophenanthroline, mersalyl, p-hydroxymercuribenzoate, bromcresol purple and tannic acid. Electroneutral antiporter that mediates the transport of adenyl nucleotides through the inner mitochondrial membrane. Originally identified as an ATP-magnesium/inorganic phosphate antiporter, it also acts as a broad specificity adenyl nucleotide antiporter. By regulating the mitochondrial matrix adenyl nucleotide pool could adapt to changing cellular energetic demands and indirectly regulate adenyl nucleotide-dependent metabolic pathways. This is Mitochondrial adenyl nucleotide antiporter SLC25A24-A (slc25a24-a) from Xenopus laevis (African clawed frog).